A 138-amino-acid chain; its full sequence is Putative pre-16S rRNA nuclease (138 aa).

This sequence belongs to the YqgF nuclease family.

The protein resides in the cytoplasm. In terms of biological role, could be a nuclease involved in processing of the 5'-end of pre-16S rRNA. This chain is Putative pre-16S rRNA nuclease, found in Clostridium tetani (strain Massachusetts / E88).